A 141-amino-acid polypeptide reads, in one-letter code: Sperm-associated microtubule inner protein 10 (141 aa).

Basic and acidic residues predominate over residues 1-16 (MASEKDDGPALPKLDD). Residues 1-33 (MASEKDDGPALPKLDDDNQTAENTCKPAEEQPQ) form a disordered region.

Microtubule inner protein component of sperm flagellar doublet microtubules. In terms of tissue distribution, expressed predominantly in the testis.

Its subcellular location is the cytoplasm. The protein localises to the cytoskeleton. It is found in the flagellum axoneme. Functionally, microtubule inner protein (MIP) part of the dynein-decorated doublet microtubules (DMTs) in flagellum axoneme, which is required for flagellum beating. May serve to reinforce and thus stabilize the microtubule structure in the sperm flagella. Involved in the regulation of sperm motility. This chain is Sperm-associated microtubule inner protein 10 (Spmip10), found in Mus musculus (Mouse).